Reading from the N-terminus, the 181-residue chain is Oligoribonuclease (181 aa).

Positions 8 to 171 (LIWIDLEMTG…DDIRESVAEL (164 aa)) constitute an Exonuclease domain. Tyrosine 129 is a catalytic residue.

The protein belongs to the oligoribonuclease family.

It localises to the cytoplasm. 3'-to-5' exoribonuclease specific for small oligoribonucleotides. The sequence is that of Oligoribonuclease from Yersinia pseudotuberculosis serotype O:1b (strain IP 31758).